A 179-amino-acid chain; its full sequence is Nuclear transcription factor Y subunit B (179 aa).

The segment at 1 to 32 (MAEAPASPGGGGGSHESGSPRGGGGGGSVREQ) is disordered. Residues 8–28 (PGGGGGSHESGSPRGGGGGGS) show a composition bias toward gly residues. Residues 36 to 42 (LPIANIS) mediate DNA binding. Positions 63–74 (VQECVSEFISFI) are subunit association domain (SAD). The interval 147 to 179 (SSSAAEGMGQQGAYNQGMGYMQPQYHNGDISNV) is disordered.

Belongs to the NFYB/HAP3 subunit family. In terms of assembly, heterotrimeric transcription factor composed of three components, NF-YA, NF-YB and NF-YC. NF-YB and NF-YC must interact and dimerize for NF-YA association and DNA binding.

It localises to the nucleus. Functionally, component of the NF-Y/HAP transcription factor complex. The NF-Y complex stimulates the transcription of various genes by recognizing and binding to a CCAAT motif in promoters. The protein is Nuclear transcription factor Y subunit B (NFY2) of Zea mays (Maize).